The sequence spans 242 residues: DNA repair protein RecO (242 aa).

This sequence belongs to the RecO family.

In terms of biological role, involved in DNA repair and RecF pathway recombination. The protein is DNA repair protein RecO of Nitrosospira multiformis (strain ATCC 25196 / NCIMB 11849 / C 71).